The primary structure comprises 364 residues: Ribosomal RNA large subunit methyltransferase F (364 aa).

Residues 1-17 are compositionally biased toward low complexity; the sequence is MPKPAIKTAAKPATSSA. The interval 1–53 is disordered; that stretch reads MPKPAIKTAAKPATSSAGKRGKPITPKSVAKPQAAKPKTVSKPKVKPGEKKRL. Over residues 39–53 the composition is skewed to basic residues; that stretch reads TVSKPKVKPGEKKRL.

Belongs to the methyltransferase superfamily. METTL16/RlmF family.

Its subcellular location is the cytoplasm. The catalysed reaction is adenosine(1618) in 23S rRNA + S-adenosyl-L-methionine = N(6)-methyladenosine(1618) in 23S rRNA + S-adenosyl-L-homocysteine + H(+). Functionally, specifically methylates the adenine in position 1618 of 23S rRNA. In Shewanella sp. (strain MR-4), this protein is Ribosomal RNA large subunit methyltransferase F.